We begin with the raw amino-acid sequence, 221 residues long: Ras-related protein Rab-27A (221 aa).

S2 carries the N-acetylserine modification. Phosphoserine is present on S2. Residue 16 to 24 participates in GTP binding; sequence GDSGVGKTS. The Effector region motif lies at 38-46; the sequence is FITTVGIDF. Residues 74–78, 133–136, and 163–165 each bind GTP; these read DTAGQ, NKSD, and SAA. C123 and C188 are oxidised to a cystine. S-geranylgeranyl cysteine attachment occurs at residues C219 and C221. C221 is subject to Cysteine methyl ester.

This sequence belongs to the small GTPase superfamily. Rab family. Binds SYTL1, SLAC2B, MYRIP, SYTL3, SYTL4 and SYTL5. Interacts with RPH3A and RPH3A. Binds MLPH and SYTL2. Interacts with UNC13D. Does not interact with the BLOC-3 complex (heterodimer of HPS1 and HPS4). Interacts (GDP-bound form preferentially) with DENND10. As to expression, high levels in eye, intestine, lung, pancreas and spleen, and low or absent in brain, liver, heart, kidney, and skeletal muscle.

The protein resides in the membrane. It is found in the melanosome. It localises to the late endosome. Its subcellular location is the lysosome. The enzyme catalyses GTP + H2O = GDP + phosphate + H(+). Regulated by guanine nucleotide exchange factors (GEFs) which promote the exchange of bound GDP for free GTP, GTPase activating proteins (GAPs) which increase the GTP hydrolysis activity, and GDP dissociation inhibitors which inhibit the dissociation of the nucleotide from the GTPase. Activated by GEFs such as DENND10. Its function is as follows. Small GTPase which cycles between active GTP-bound and inactive GDP-bound states. In its active state, binds to a variety of effector proteins to regulate homeostasis of late endocytic pathway, including endosomal positioning, maturation and secretion. Plays a role in cytotoxic granule exocytosis in lymphocytes. Required for both granule maturation and granule docking and priming at the immunologic synapse. The polypeptide is Ras-related protein Rab-27A (Rab27a) (Rattus norvegicus (Rat)).